The sequence spans 104 residues: Large ribosomal subunit protein uL24 (104 aa).

The protein belongs to the universal ribosomal protein uL24 family. In terms of assembly, part of the 50S ribosomal subunit.

One of two assembly initiator proteins, it binds directly to the 5'-end of the 23S rRNA, where it nucleates assembly of the 50S subunit. Functionally, one of the proteins that surrounds the polypeptide exit tunnel on the outside of the subunit. The chain is Large ribosomal subunit protein uL24 from Methylorubrum populi (strain ATCC BAA-705 / NCIMB 13946 / BJ001) (Methylobacterium populi).